The chain runs to 245 residues: Small ribosomal subunit protein uS2 (245 aa).

It belongs to the universal ribosomal protein uS2 family.

The sequence is that of Small ribosomal subunit protein uS2 from Dehalococcoides mccartyi (strain CBDB1).